The chain runs to 1072 residues: DNA-directed RNA polymerase subunit beta (1072 aa).

It belongs to the RNA polymerase beta chain family. As to quaternary structure, in plastids the minimal PEP RNA polymerase catalytic core is composed of four subunits: alpha, beta, beta', and beta''. When a (nuclear-encoded) sigma factor is associated with the core the holoenzyme is formed, which can initiate transcription.

It localises to the plastid. The protein resides in the chloroplast. It catalyses the reaction RNA(n) + a ribonucleoside 5'-triphosphate = RNA(n+1) + diphosphate. In terms of biological role, DNA-dependent RNA polymerase catalyzes the transcription of DNA into RNA using the four ribonucleoside triphosphates as substrates. The polypeptide is DNA-directed RNA polymerase subunit beta (Barbarea verna (Land cress)).